A 139-amino-acid chain; its full sequence is Small ribosomal subunit protein uS12 (139 aa).

A disordered region spans residues 1–44 (MPTINQLVRKPRQSKITKSKSPALNKGYNSFKKSLTDVKSPQKR). Basic residues predominate over residues 9-18 (RKPRQSKITK). Positions 19–39 (SKSPALNKGYNSFKKSLTDVK) are enriched in polar residues. At Asp-102 the chain carries 3-methylthioaspartic acid.

It belongs to the universal ribosomal protein uS12 family. In terms of assembly, part of the 30S ribosomal subunit. Contacts proteins S8 and S17. May interact with IF1 in the 30S initiation complex.

With S4 and S5 plays an important role in translational accuracy. Its function is as follows. Interacts with and stabilizes bases of the 16S rRNA that are involved in tRNA selection in the A site and with the mRNA backbone. Located at the interface of the 30S and 50S subunits, it traverses the body of the 30S subunit contacting proteins on the other side and probably holding the rRNA structure together. The combined cluster of proteins S8, S12 and S17 appears to hold together the shoulder and platform of the 30S subunit. The chain is Small ribosomal subunit protein uS12 from Lysinibacillus sphaericus (strain C3-41).